The sequence spans 1417 residues: DNA-directed RNA polymerase subunit beta' (1417 aa).

C68, C70, C83, and C86 together coordinate Zn(2+). Residues D458, D460, and D462 each coordinate Mg(2+). Zn(2+)-binding residues include C811, C884, C891, and C894.

This sequence belongs to the RNA polymerase beta' chain family. The RNAP catalytic core consists of 2 alpha, 1 beta, 1 beta' and 1 omega subunit. When a sigma factor is associated with the core the holoenzyme is formed, which can initiate transcription. It depends on Mg(2+) as a cofactor. Requires Zn(2+) as cofactor.

It catalyses the reaction RNA(n) + a ribonucleoside 5'-triphosphate = RNA(n+1) + diphosphate. DNA-dependent RNA polymerase catalyzes the transcription of DNA into RNA using the four ribonucleoside triphosphates as substrates. The chain is DNA-directed RNA polymerase subunit beta' from Francisella tularensis subsp. mediasiatica (strain FSC147).